The sequence spans 265 residues: Transmembrane protein 270 (265 aa).

Helical transmembrane passes span 72–92 (PLGQ…WLVL), 130–150 (LFLS…VVTW), and 185–205 (LYWW…YLIT). The interval 229–265 (QEVEPQEVSGSSLLPSLSASSDSESGTVLPEQETPRE) is disordered. The span at 237–253 (SGSSLLPSLSASSDSES) shows a compositional bias: low complexity.

Its subcellular location is the membrane. The protein is Transmembrane protein 270 of Homo sapiens (Human).